Here is a 513-residue protein sequence, read N- to C-terminus: Probable DNA ligase (513 aa).

Glu213 lines the ATP pocket. Lys215 functions as the N6-AMP-lysine intermediate in the catalytic mechanism. The ATP site is built by Arg220, Arg235, Glu264, Phe304, Arg376, and Lys382.

Belongs to the ATP-dependent DNA ligase family. Mg(2+) serves as cofactor.

The catalysed reaction is ATP + (deoxyribonucleotide)n-3'-hydroxyl + 5'-phospho-(deoxyribonucleotide)m = (deoxyribonucleotide)n+m + AMP + diphosphate.. In terms of biological role, DNA ligase that seals nicks in double-stranded DNA during DNA replication, DNA recombination and DNA repair. This is Probable DNA ligase from Anaeromyxobacter sp. (strain K).